The sequence spans 689 residues: Glycine--tRNA ligase beta subunit (689 aa).

The protein belongs to the class-II aminoacyl-tRNA synthetase family. In terms of assembly, tetramer of two alpha and two beta subunits.

It localises to the cytoplasm. It catalyses the reaction tRNA(Gly) + glycine + ATP = glycyl-tRNA(Gly) + AMP + diphosphate. The polypeptide is Glycine--tRNA ligase beta subunit (Acinetobacter baumannii (strain AB307-0294)).